The following is a 38-amino-acid chain: YTAKQCLQAIGSCGIAGTGAGAAGGPAGAFVGAXVVXI.

It localises to the secreted. Its function is as follows. Bacteriocin active against Listeria monocytogenes, Pediococcus, Enterococcus, Lactobacilli and Bacilli. This Latilactobacillus curvatus (Lactobacillus curvatus) protein is Bacteriocin curvaticin FS47.